The sequence spans 303 residues: Methionyl-tRNA formyltransferase (303 aa).

A (6S)-5,6,7,8-tetrahydrofolate-binding site is contributed by 108-111; sequence SDLP.

This sequence belongs to the Fmt family.

It catalyses the reaction L-methionyl-tRNA(fMet) + (6R)-10-formyltetrahydrofolate = N-formyl-L-methionyl-tRNA(fMet) + (6S)-5,6,7,8-tetrahydrofolate + H(+). Functionally, attaches a formyl group to the free amino group of methionyl-tRNA(fMet). The formyl group appears to play a dual role in the initiator identity of N-formylmethionyl-tRNA by promoting its recognition by IF2 and preventing the misappropriation of this tRNA by the elongation apparatus. In Rickettsia peacockii (strain Rustic), this protein is Methionyl-tRNA formyltransferase.